The sequence spans 171 residues: ATP synthase subunit b (171 aa).

Residues 19–39 form a helical membrane-spanning segment; the sequence is VGVGLILFIAIVIWAKAPAMI.

This sequence belongs to the ATPase B chain family. In terms of assembly, F-type ATPases have 2 components, F(1) - the catalytic core - and F(0) - the membrane proton channel. F(1) has five subunits: alpha(3), beta(3), gamma(1), delta(1), epsilon(1). F(0) has three main subunits: a(1), b(2) and c(10-14). The alpha and beta chains form an alternating ring which encloses part of the gamma chain. F(1) is attached to F(0) by a central stalk formed by the gamma and epsilon chains, while a peripheral stalk is formed by the delta and b chains.

It is found in the cell inner membrane. Functionally, f(1)F(0) ATP synthase produces ATP from ADP in the presence of a proton or sodium gradient. F-type ATPases consist of two structural domains, F(1) containing the extramembraneous catalytic core and F(0) containing the membrane proton channel, linked together by a central stalk and a peripheral stalk. During catalysis, ATP synthesis in the catalytic domain of F(1) is coupled via a rotary mechanism of the central stalk subunits to proton translocation. Its function is as follows. Component of the F(0) channel, it forms part of the peripheral stalk, linking F(1) to F(0). This Caulobacter sp. (strain K31) protein is ATP synthase subunit b.